A 51-amino-acid chain; its full sequence is Large ribosomal subunit protein eL39 (51 aa).

Belongs to the eukaryotic ribosomal protein eL39 family.

This chain is Large ribosomal subunit protein eL39 (rpl39e), found in Methanocaldococcus jannaschii (strain ATCC 43067 / DSM 2661 / JAL-1 / JCM 10045 / NBRC 100440) (Methanococcus jannaschii).